Reading from the N-terminus, the 193-residue chain is Peptidyl-tRNA hydrolase (193 aa).

Residue Tyr-14 participates in tRNA binding. Residue His-19 is the Proton acceptor of the active site. Phe-64, Asn-66, and Asn-112 together coordinate tRNA.

This sequence belongs to the PTH family. As to quaternary structure, monomer.

The protein localises to the cytoplasm. It catalyses the reaction an N-acyl-L-alpha-aminoacyl-tRNA + H2O = an N-acyl-L-amino acid + a tRNA + H(+). Functionally, hydrolyzes ribosome-free peptidyl-tRNAs (with 1 or more amino acids incorporated), which drop off the ribosome during protein synthesis, or as a result of ribosome stalling. Its function is as follows. Catalyzes the release of premature peptidyl moieties from peptidyl-tRNA molecules trapped in stalled 50S ribosomal subunits, and thus maintains levels of free tRNAs and 50S ribosomes. This chain is Peptidyl-tRNA hydrolase, found in Bartonella quintana (strain Toulouse) (Rochalimaea quintana).